The following is a 320-amino-acid chain: Endolytic peptidoglycan transglycosylase RlpA (320 aa).

This sequence belongs to the RlpA family.

Its function is as follows. Lytic transglycosylase with a strong preference for naked glycan strands that lack stem peptides. The polypeptide is Endolytic peptidoglycan transglycosylase RlpA (Rickettsia typhi (strain ATCC VR-144 / Wilmington)).